Here is a 451-residue protein sequence, read N- to C-terminus: uncharacterized protein (451 aa).

Residues leucine 29–isoleucine 204 form the FAD-binding PCMH-type domain. Histidine 66 carries the post-translational modification Pros-8alpha-FAD histidine.

The protein belongs to the oxygen-dependent FAD-linked oxidoreductase family. The cofactor is FAD.

This is an uncharacterized protein from Bacillus subtilis (strain 168).